The sequence spans 149 residues: Calmodulin (149 aa).

Alanine 2 is subject to N-acetylalanine. EF-hand domains are found at residues 8–43 (EQIA…LGQN), 44–79 (PTEA…KMKD), 81–116 (DSEE…LGEK), and 117–149 (LTDE…MTSK). The Ca(2+) site is built by aspartate 21, aspartate 23, aspartate 25, threonine 27, glutamate 32, aspartate 57, aspartate 59, asparagine 61, threonine 63, glutamate 68, aspartate 94, aspartate 96, asparagine 98, and glutamate 105. Lysine 116 carries the N6,N6,N6-trimethyllysine modification. Residues aspartate 130, aspartate 132, aspartate 134, glutamine 136, and glutamate 141 each contribute to the Ca(2+) site.

This sequence belongs to the calmodulin family.

In terms of biological role, calmodulin mediates the control of a large number of enzymes, ion channels and other proteins by Ca(2+). Among the enzymes to be stimulated by the calmodulin-Ca(2+) complex are a number of protein kinases and phosphatases. The chain is Calmodulin from Metridium senile (Brown sea anemone).